The following is a 95-amino-acid chain: Probable dolichol-phosphate mannosyltransferase subunit 3 (95 aa).

Transmembrane regions (helical) follow at residues 10–30 (AHVI…VPVL) and 44–64 (APFF…VYGV).

Belongs to the DPM3 family.

The protein resides in the endoplasmic reticulum membrane. Its pathway is protein modification; protein glycosylation. Stabilizer subunit of the dolichol-phosphate-mannose synthase complex. This is Probable dolichol-phosphate mannosyltransferase subunit 3 (dpm-3) from Caenorhabditis elegans.